We begin with the raw amino-acid sequence, 321 residues long: Ubiquinone biosynthesis protein COQ4, mitochondrial (321 aa).

Residues His-205, Asp-206, His-209, and Glu-221 each contribute to the Zn(2+) site.

It belongs to the COQ4 family. Component of a multi-subunit COQ enzyme complex, composed of at least COQ3, COQ4, COQ5, COQ6, COQ7 and COQ9. Zn(2+) serves as cofactor.

It is found in the mitochondrion inner membrane. The catalysed reaction is a 4-hydroxy-3-methoxy-5-(all-trans-polyprenyl)benzoate + H(+) = a 2-methoxy-6-(all-trans-polyprenyl)phenol + CO2. It functions in the pathway cofactor biosynthesis; ubiquinone biosynthesis. Functionally, lyase that catalyzes the C1-decarboxylation of 4-hydroxy-3-methoxy-5-(all-trans-polyprenyl)benzoic acid into 2-methoxy-6-(all-trans-polyprenyl)phenol during ubiquinone biosynthesis. The protein is Ubiquinone biosynthesis protein COQ4, mitochondrial of Candida tropicalis (strain ATCC MYA-3404 / T1) (Yeast).